The following is a 273-amino-acid chain: Formamidopyrimidine-DNA glycosylase (273 aa).

P2 functions as the Schiff-base intermediate with DNA in the catalytic mechanism. E3 acts as the Proton donor in catalysis. Residue K58 is the Proton donor; for beta-elimination activity of the active site. DNA is bound by residues H92, R111, and K153. The segment at 238–272 adopts an FPG-type zinc-finger fold; sequence KVYGREGQSCLSCSSTIIKIKHSGRSTFYCKTCQY. The active-site Proton donor; for delta-elimination activity is R262.

This sequence belongs to the FPG family. In terms of assembly, monomer. The cofactor is Zn(2+).

It catalyses the reaction Hydrolysis of DNA containing ring-opened 7-methylguanine residues, releasing 2,6-diamino-4-hydroxy-5-(N-methyl)formamidopyrimidine.. The catalysed reaction is 2'-deoxyribonucleotide-(2'-deoxyribose 5'-phosphate)-2'-deoxyribonucleotide-DNA = a 3'-end 2'-deoxyribonucleotide-(2,3-dehydro-2,3-deoxyribose 5'-phosphate)-DNA + a 5'-end 5'-phospho-2'-deoxyribonucleoside-DNA + H(+). In terms of biological role, involved in base excision repair of DNA damaged by oxidation or by mutagenic agents. Acts as a DNA glycosylase that recognizes and removes damaged bases. Has a preference for oxidized purines, such as 7,8-dihydro-8-oxoguanine (8-oxoG). Has AP (apurinic/apyrimidinic) lyase activity and introduces nicks in the DNA strand. Cleaves the DNA backbone by beta-delta elimination to generate a single-strand break at the site of the removed base with both 3'- and 5'-phosphates. In Rickettsia africae (strain ESF-5), this protein is Formamidopyrimidine-DNA glycosylase.